Here is a 413-residue protein sequence, read N- to C-terminus: uncharacterized protein (413 aa).

Residues 14–34 (LLFFTVVIIPIFYYIYKIVYL) traverse the membrane as a helical segment. N46, N55, N103, N171, N179, N184, N220, N252, N260, N273, N362, N366, N374, N378, N393, and N408 each carry an N-linked (GlcNAc...) asparagine; by host glycan. A compositionally biased stretch (low complexity) spans 250-263 (TKNSTETNSDNNSE). Residues 250 to 277 (TKNSTETNSDNNSEIVSETNSETNYSTP) form a disordered region. Over residues 264-277 (IVSETNSETNYSTP) the composition is skewed to polar residues.

It localises to the membrane. This is an uncharacterized protein from Acanthamoeba polyphaga (Amoeba).